We begin with the raw amino-acid sequence, 51 residues long: Large ribosomal subunit protein eL39 (51 aa).

Belongs to the eukaryotic ribosomal protein eL39 family.

This chain is Large ribosomal subunit protein eL39, found in Methanococcus aeolicus (strain ATCC BAA-1280 / DSM 17508 / OCM 812 / Nankai-3).